The following is an 873-amino-acid chain: Bifunctional heparan sulfate N-deacetylase/N-sulfotransferase 3 (873 aa).

At 1 to 13 the chain is on the cytoplasmic side; that stretch reads MSFIMKPHRHFQR. A helical; Signal-anchor for type II membrane protein membrane pass occupies residues 14-34; the sequence is TLILLATFCMVSIIISAYYLY. The Lumenal segment spans residues 35-873; the sequence is SGYKQESEVS…WLRQELQKVR (839 aa). Residues 36–589 form a heparan sulfate N-deacetylase 3 region; it reads GYKQESEVSG…KRHRDIWSKE (554 aa). Residues Asn-146, Asn-226, Asn-342, and Asn-392 are each glycosylated (N-linked (GlcNAc...) asparagine). The heparan sulfate N-sulfotransferase 3 stretch occupies residues 590–873; it reads KTCDRLPKFL…WLRQELQKVR (284 aa). The For sulfotransferase activity role is filled by Lys-605. 605-609 serves as a coordination point for 3'-phosphoadenylyl sulfate; sequence KTGTT. Asn-658 carries N-linked (GlcNAc...) asparagine glycosylation. Residue Ser-703 coordinates 3'-phosphoadenylyl sulfate. Residue Asn-794 is glycosylated (N-linked (GlcNAc...) asparagine). Cys-809 and Cys-819 are disulfide-bonded. 824–828 lines the 3'-phosphoadenylyl sulfate pocket; the sequence is KGRKY.

It belongs to the sulfotransferase 1 family. NDST subfamily. Monomer. In terms of tissue distribution, strongly expressed strongly in brain. Expressed at high level at embryonic day 11 compared to other stages of development. Weakly expressed in adult heart, kidney, muscle, endothelial cells and testis but not in other tissues.

It is found in the golgi apparatus membrane. The catalysed reaction is alpha-D-glucosaminyl-[heparan sulfate](n) + 3'-phosphoadenylyl sulfate = N-sulfo-alpha-D-glucosaminyl-[heparan sulfate](n) + adenosine 3',5'-bisphosphate + 2 H(+). It participates in glycan metabolism; heparan sulfate biosynthesis. The protein operates within glycan metabolism; heparin biosynthesis. Its function is as follows. Essential bifunctional enzyme that catalyzes both the N-deacetylation and the N-sulfation of glucosamine (GlcNAc) of the glycosaminoglycan in heparan sulfate. Modifies the GlcNAc-GlcA disaccharide repeating sugar backbone to make N-sulfated heparosan, a prerequisite substrate for later modifications in heparin biosynthesis. Has high deacetylase activity but low sulfotransferase activity. The polypeptide is Bifunctional heparan sulfate N-deacetylase/N-sulfotransferase 3 (Ndst3) (Mus musculus (Mouse)).